A 429-amino-acid polypeptide reads, in one-letter code: Ribosomal RNA small subunit methyltransferase B (429 aa).

S-adenosyl-L-methionine is bound by residues 254–260 (CAAPGGK), aspartate 277, aspartate 303, and aspartate 322. Residue cysteine 375 is the Nucleophile of the active site.

It belongs to the class I-like SAM-binding methyltransferase superfamily. RsmB/NOP family.

The protein localises to the cytoplasm. It catalyses the reaction cytidine(967) in 16S rRNA + S-adenosyl-L-methionine = 5-methylcytidine(967) in 16S rRNA + S-adenosyl-L-homocysteine + H(+). Functionally, specifically methylates the cytosine at position 967 (m5C967) of 16S rRNA. The polypeptide is Ribosomal RNA small subunit methyltransferase B (Yersinia enterocolitica serotype O:8 / biotype 1B (strain NCTC 13174 / 8081)).